The primary structure comprises 209 residues: Octanoyltransferase (209 aa).

A BPL/LPL catalytic domain is found at 30 to 209 (DHKPEIIYLV…IQTEFNKIFK (180 aa)). Residues 69–76 (RGGKFTFH), 143–145 (AIG), and 156–158 (GVA) each bind substrate. The active-site Acyl-thioester intermediate is the cysteine 174.

Belongs to the LipB family.

The protein localises to the cytoplasm. The enzyme catalyses octanoyl-[ACP] + L-lysyl-[protein] = N(6)-octanoyl-L-lysyl-[protein] + holo-[ACP] + H(+). It functions in the pathway protein modification; protein lipoylation via endogenous pathway; protein N(6)-(lipoyl)lysine from octanoyl-[acyl-carrier-protein]: step 1/2. Its function is as follows. Catalyzes the transfer of endogenously produced octanoic acid from octanoyl-acyl-carrier-protein onto the lipoyl domains of lipoate-dependent enzymes. Lipoyl-ACP can also act as a substrate although octanoyl-ACP is likely to be the physiological substrate. In Rickettsia conorii (strain ATCC VR-613 / Malish 7), this protein is Octanoyltransferase.